We begin with the raw amino-acid sequence, 224 residues long: MSSYFVNSTFPVTLASGQESFLGQLPLYSSGYADPLRHYPAPYGPGPGQDKGFATSSYYPPAGGGYGRAAPCDYGPAPAFYREKESACALSGADEQPPFHPEPRKSDCAQDKSVFGETEEQKCSTPVYPWMQRMNSCNSSSFGPSGRRGRQTYTRYQTLELEKEFHYNRYLTRRRRIEIAHALCLTERQIKIWFQNRRMKWKKESKLLSASQLSAEEEEEKQAE.

An Antp-type hexapeptide motif is present at residues 127 to 132; sequence VYPWMQ. A DNA-binding region (homeobox) is located at residues 146–205; the sequence is GRRGRQTYTRYQTLELEKEFHYNRYLTRRRRIEIAHALCLTERQIKIWFQNRRMKWKKES. The residue at position 214 (Ser-214) is a Phosphoserine.

It belongs to the Antp homeobox family.

It localises to the nucleus. Sequence-specific transcription factor which is part of a developmental regulatory system that provides cells with specific positional identities on the anterior-posterior axis. This chain is Homeobox protein Hox-B6 (HOXB6), found in Homo sapiens (Human).